The following is a 439-amino-acid chain: Eukaryotic translation initiation factor 2 subunit gamma (439 aa).

The 205-residue stretch at 11-215 (QATLNIGTIG…FIVNYIPEPV (205 aa)) folds into the tr-type G domain. Positions 20–27 (GHVAHGKS) are G1. Residue 23–28 (AHGKST) participates in GTP binding. Residues 48–52 (NITIK) form a G2 region. The G3 stretch occupies residues 103 to 106 (DCPG). GTP is bound by residues 159–162 (NKID) and 193–195 (AAQ). The segment at 159–162 (NKID) is G4. The segment at 193–195 (AAQ) is G5. The interval 415-427 (GEIKDGTCIEPEY) is interacts with CDC123.

Belongs to the TRAFAC class translation factor GTPase superfamily. Classic translation factor GTPase family. EIF2G subfamily. In terms of assembly, eukaryotic translation initiation factor 2 eIF2 is a heterotrimeric complex composed of an alpha, a beta and a gamma subunit. The factors eIF-1, eIF-2, eIF-3, TIF5/eIF-5 and methionyl-tRNAi form a multifactor complex (MFC) that may bind to the 40S ribosome.

The protein resides in the cytoplasm. It localises to the cytosol. The catalysed reaction is GTP + H2O = GDP + phosphate + H(+). Its function is as follows. As a subunit of eukaryotic initiation factor 2 eIF2, involved in the early steps of protein synthesis. In the presence of GTP, eIF-2 forms a ternary complex with initiator tRNA Met-tRNAi and then recruits the 40S ribosomal complex and initiation factors eIF-1, eIF-1A and eIF-3 to form the 43S pre-initiation complex (43S PIC), a step that determines the rate of protein translation. The 43S PIC binds to mRNA and scans downstream to the initiation codon, where it forms a 48S initiation complex by codon-anticodon base pairing. This leads to the displacement of eIF-1 to allow GTPase-activating protein (GAP) eIF-5-mediated hydrolysis of eIF2-bound GTP. Hydrolysis of GTP and release of Pi, which makes GTP hydrolysis irreversible, causes the release of the eIF-2-GDP binary complex from the 40S subunit, an event that is essential for the subsequent joining of the 60S ribosomal subunit to form an elongation-competent 80S ribosome. In order for eIF-2 to recycle and catalyze another round of initiation, the GDP bound to eIF-2 must be exchanged with GTP by way of a reaction catalyzed by GDP-GTP exchange factor (GEF) eIF-2B. This is Eukaryotic translation initiation factor 2 subunit gamma from Encephalitozoon cuniculi (strain GB-M1) (Microsporidian parasite).